A 184-amino-acid polypeptide reads, in one-letter code: Shikimate kinase (184 aa).

Residue 17-22 (GAGKTT) participates in ATP binding. T21 is a binding site for Mg(2+). Residues D39, R63, and G85 each coordinate substrate. R123 provides a ligand contact to ATP. R142 serves as a coordination point for substrate.

This sequence belongs to the shikimate kinase family. As to quaternary structure, monomer. The cofactor is Mg(2+).

Its subcellular location is the cytoplasm. The catalysed reaction is shikimate + ATP = 3-phosphoshikimate + ADP + H(+). Its pathway is metabolic intermediate biosynthesis; chorismate biosynthesis; chorismate from D-erythrose 4-phosphate and phosphoenolpyruvate: step 5/7. In terms of biological role, catalyzes the specific phosphorylation of the 3-hydroxyl group of shikimic acid using ATP as a cosubstrate. The sequence is that of Shikimate kinase from Burkholderia lata (strain ATCC 17760 / DSM 23089 / LMG 22485 / NCIMB 9086 / R18194 / 383).